The sequence spans 470 residues: MNYADKKILVLGMGKTGISMVKWLSRAGARVSVADTRTTPPNLELLSQIVPLETIFCGPFKAELFKDIDAIAISPGVAIAEPLVQAALQQGVSVIGDIELFAIALDQHAPPGTKILAITGSNGKTTVATMVGEMARNTGWDVEVAGNIGLAALDALMQRIDTGKWPHLWVLELSSFQLETTSSLRPNAAVVLNLSEDHLDRYRIIEEYAAAKARIFPDPHNSCVQVLNREDARVYAMAHENSKQLTFGLSAPAFDDEFGVLPSGSDLWLAQGTTRLMKVSELAVAGLHNAANALAALALCRAIDLPFEPLLHALHIFKGLPHRMQKIAEFNGVTFYDDSKSTNVGSAVAALNGFRKNVILIAGGDGKGQDFSPLEQPVSKHTRGVVLLGRDAEKISQAIQGCNVPVHRVATMDEAVRVSFLLAERGDSVLLSPACASLDMFNNYIHRAEVFTTAVQGIEHKFILTAQTCH.

120-126 (GSNGKTT) serves as a coordination point for ATP.

It belongs to the MurCDEF family.

Its subcellular location is the cytoplasm. The enzyme catalyses UDP-N-acetyl-alpha-D-muramoyl-L-alanine + D-glutamate + ATP = UDP-N-acetyl-alpha-D-muramoyl-L-alanyl-D-glutamate + ADP + phosphate + H(+). Its pathway is cell wall biogenesis; peptidoglycan biosynthesis. Its function is as follows. Cell wall formation. Catalyzes the addition of glutamate to the nucleotide precursor UDP-N-acetylmuramoyl-L-alanine (UMA). This is UDP-N-acetylmuramoylalanine--D-glutamate ligase from Nitrosomonas eutropha (strain DSM 101675 / C91 / Nm57).